The primary structure comprises 364 residues: Oxidized polyvinyl alcohol hydrolase (364 aa).

The N-terminal stretch at 1 to 34 is a signal peptide; it reads MFKPVVKSRSSRSFCYLAGCLAMVAATLSSTAQA. Residues serine 190 and serine 293 each act as charge relay system in the active site.

The protein belongs to the peptidase S9A family. As to quaternary structure, monomer.

It is found in the periplasm. The catalysed reaction is nonane-4,6-dione + H2O = pentan-2-one + butanoate + H(+). Its function is as follows. Catalyzes the hydrolysis of 4,6-nonanedione, a beta-diketone compound. Also mediates hydrolysis of oxidized polyvinyl alcohol (PVA) in the second step in the degradation of polyvinyl alcohol. Not active toward the monoketone structure. This Sphingopyxis sp. (strain 113P3) protein is Oxidized polyvinyl alcohol hydrolase (oph).